Consider the following 54-residue polypeptide: Ovomucoid (54 aa).

One can recognise a Kazal-like domain in the interval 4 to 54 (VDCSDYPKPACRMEYMPLCGSDNKTYGNKCNFCNAVVDSNGTLTLSHFGKC). 3 disulfides stabilise this stretch: cysteine 6–cysteine 36, cysteine 14–cysteine 33, and cysteine 22–cysteine 54. N-linked (GlcNAc...) asparagine glycosylation occurs at asparagine 43.

It is found in the secreted. This chain is Ovomucoid, found in Cereopsis novaehollandiae (Cape Barren goose).